Consider the following 257-residue polypeptide: MLILISPAKTLDYQSPLATTRYTQPELLDHSQQLIQQARQLSAPQISRLMGISDKLADLNATRFHDWQPHFTPDNARQAILAFKGDVYTGLQAETFNDADFDFAQQHLRMLSGLYGVLRPLDLMQPYRLEMGIRLENPRGKDLYQFWGDIITDKLNEALEAQGDRVVVNLASEEYFKSVKPKKLDAELIKPVFLDEKNGKFKVVSFYAKKARGLMSRFIIENRLTKPEQLTAFDREGYFFDEETSTQDELVFKRYEQ.

The protein belongs to the UPF0246 family.

The polypeptide is UPF0246 protein YaaA (Salmonella typhi).